A 123-amino-acid polypeptide reads, in one-letter code: Holo-[acyl-carrier-protein] synthase (123 aa).

Positions 8 and 60 each coordinate Mg(2+).

Belongs to the P-Pant transferase superfamily. AcpS family. The cofactor is Mg(2+).

The protein localises to the cytoplasm. The enzyme catalyses apo-[ACP] + CoA = holo-[ACP] + adenosine 3',5'-bisphosphate + H(+). Functionally, transfers the 4'-phosphopantetheine moiety from coenzyme A to a Ser of acyl-carrier-protein. The polypeptide is Holo-[acyl-carrier-protein] synthase (Wolbachia pipientis wMel).